Reading from the N-terminus, the 361-residue chain is UDP-3-O-acylglucosamine N-acyltransferase (361 aa).

Catalysis depends on H253, which acts as the Proton acceptor.

The protein belongs to the transferase hexapeptide repeat family. LpxD subfamily. Homotrimer.

The catalysed reaction is a UDP-3-O-[(3R)-3-hydroxyacyl]-alpha-D-glucosamine + a (3R)-hydroxyacyl-[ACP] = a UDP-2-N,3-O-bis[(3R)-3-hydroxyacyl]-alpha-D-glucosamine + holo-[ACP] + H(+). The protein operates within bacterial outer membrane biogenesis; LPS lipid A biosynthesis. Catalyzes the N-acylation of UDP-3-O-acylglucosamine using 3-hydroxyacyl-ACP as the acyl donor. Is involved in the biosynthesis of lipid A, a phosphorylated glycolipid that anchors the lipopolysaccharide to the outer membrane of the cell. The polypeptide is UDP-3-O-acylglucosamine N-acyltransferase (Burkholderia pseudomallei (strain 1710b)).